We begin with the raw amino-acid sequence, 63 residues long: Venom peptide 2a (63 aa).

The signal sequence occupies residues 1 to 22 (MRGTSFILFAVVVILGFLNANA). AXPX repeat units lie at residues 22–25 (AEPL), 26–29 (ANPA), 32–35 (ANPD), 38–41 (ANPD), and 44–47 (ANPE). A propeptide spanning residues 23 to 48 (EPLANPAPLANPDPLANPDPLANPEA) is cleaved from the precursor. Position 62 is a leucine amide (Leu62).

As to expression, expressed by the venom gland.

The protein localises to the secreted. It localises to the target cell membrane. Functionally, antimicrobial peptide. Shows activities against Gram-positive bacteria (S.aureus MIC=50 uM and 200 ug/ml, and B.subtilis MIC=200 ug/ml), Gram-negative bacterium E.coli (MIC=100 uM and 200 ug/ml) and fungi (B.cinerea MIC=5 uM, S.cerevisiae MIC=128 ug/ml, S.pombe MIC=128 ug/ml, A.nidulans MIC=128 ug/ml, and C.albicans MIC=64-100 uM). Shows cytolytic activity against insect cell lines. Its hemolytic activity is controversial, as Baek and colleagues report no activity while Bea and colleagues note a hemolytic activity. In vivo, peptide injection in the vicinity of the head and thorax of lepidopteran larvae induces feeding disorder followed by death due to starvation. Is weakly lethal when tested on water flies (D.magna), but is not lethal on lady beetles (H.convergens). The sequence is that of Venom peptide 2a from Eumenes pomiformis (Potter wasp).